Here is a 213-residue protein sequence, read N- to C-terminus: High frequency lysogenization protein HflD homolog (213 aa).

Belongs to the HflD family.

It is found in the cytoplasm. The protein localises to the cell inner membrane. In Nitrosococcus oceani (strain ATCC 19707 / BCRC 17464 / JCM 30415 / NCIMB 11848 / C-107), this protein is High frequency lysogenization protein HflD homolog.